The primary structure comprises 110 residues: Large ribosomal subunit protein uL22 (110 aa).

It belongs to the universal ribosomal protein uL22 family. As to quaternary structure, part of the 50S ribosomal subunit.

Functionally, this protein binds specifically to 23S rRNA; its binding is stimulated by other ribosomal proteins, e.g. L4, L17, and L20. It is important during the early stages of 50S assembly. It makes multiple contacts with different domains of the 23S rRNA in the assembled 50S subunit and ribosome. The globular domain of the protein is located near the polypeptide exit tunnel on the outside of the subunit, while an extended beta-hairpin is found that lines the wall of the exit tunnel in the center of the 70S ribosome. This Stutzerimonas stutzeri (strain A1501) (Pseudomonas stutzeri) protein is Large ribosomal subunit protein uL22.